A 193-amino-acid chain; its full sequence is Ion-translocating oxidoreductase complex subunit A (193 aa).

6 helical membrane passes run 5–25 (LMLF…FLGL), 39–59 (LGMG…AWLI), 62–82 (FILL…FIIA), 102–122 (LLGI…VALL), 134–154 (ALYG…FAAI), and 171–191 (SIAL…TGLV).

Belongs to the NqrDE/RnfAE family. In terms of assembly, the complex is composed of six subunits: RnfA, RnfB, RnfC, RnfD, RnfE and RnfG.

It localises to the cell inner membrane. In terms of biological role, part of a membrane-bound complex that couples electron transfer with translocation of ions across the membrane. This is Ion-translocating oxidoreductase complex subunit A from Sodalis glossinidius (strain morsitans).